The following is a 632-amino-acid chain: Sporulenol synthase (632 aa).

Asp377 acts as the Proton donor in catalysis. PFTB repeat units follow at residues 395–436 (WERG…EDAA), 465–505 (IQRA…HACG), and 513–554 (IQKA…VQTA).

Belongs to the terpene cyclase/mutase family.

It localises to the cell membrane. It carries out the reaction sporulenol = (R)-tetraprenyl-beta-curcumene + H2O. It participates in secondary metabolite biosynthesis; hopanoid biosynthesis. Functionally, catalyzes the cyclization of tetraprenyl beta-curcumene into sporulenol. The sequence is that of Sporulenol synthase (sqhC) from Bacillus subtilis (strain 168).